The following is a 257-amino-acid chain: Type III pantothenate kinase (257 aa).

Position 6-13 (6-13 (DAGNTNIV)) interacts with ATP. Residues Tyr100 and 107–110 (GADR) each bind substrate. Asp109 (proton acceptor) is an active-site residue. Position 129 (Asp129) interacts with K(+). Position 132 (Thr132) interacts with ATP. Thr184 lines the substrate pocket.

The protein belongs to the type III pantothenate kinase family. In terms of assembly, homodimer. It depends on NH4(+) as a cofactor. K(+) is required as a cofactor.

The protein resides in the cytoplasm. The enzyme catalyses (R)-pantothenate + ATP = (R)-4'-phosphopantothenate + ADP + H(+). The protein operates within cofactor biosynthesis; coenzyme A biosynthesis; CoA from (R)-pantothenate: step 1/5. In terms of biological role, catalyzes the phosphorylation of pantothenate (Pan), the first step in CoA biosynthesis. The protein is Type III pantothenate kinase of Clostridium botulinum (strain Alaska E43 / Type E3).